The primary structure comprises 327 residues: Tryptophan--tRNA ligase (327 aa).

ATP-binding positions include 9 to 11 (QPS) and 17 to 18 (GN). Positions 10–18 (PSGDIHIGN) match the 'HIGH' region motif. Asp132 is a binding site for L-tryptophan. ATP-binding positions include 144-146 (GED), Ile183, and 192-196 (KMSKS). Positions 192-196 (KMSKS) match the 'KMSKS' region motif.

The protein belongs to the class-I aminoacyl-tRNA synthetase family. Homodimer.

The protein localises to the cytoplasm. It carries out the reaction tRNA(Trp) + L-tryptophan + ATP = L-tryptophyl-tRNA(Trp) + AMP + diphosphate + H(+). Its function is as follows. Catalyzes the attachment of tryptophan to tRNA(Trp). In Caldanaerobacter subterraneus subsp. tengcongensis (strain DSM 15242 / JCM 11007 / NBRC 100824 / MB4) (Thermoanaerobacter tengcongensis), this protein is Tryptophan--tRNA ligase.